A 367-amino-acid polypeptide reads, in one-letter code: Heme A synthase (367 aa).

5 helical membrane-spanning segments follow: residues 26–46 (IRGW…VGGA), 111–131 (LLAR…WLTG), 139–159 (LPLL…WWMV), 174–194 (LATH…IYRG), and 212–232 (AGII…VAGL). Histidine 274 lines the heme pocket. The next 3 membrane-spanning stretches (helical) occupy residues 276–296 (AGAY…LRAA), 305–325 (SVLL…TLLL), and 327–347 (VPIV…GFAI). Histidine 335 is a binding site for heme.

It belongs to the COX15/CtaA family. Type 2 subfamily. In terms of assembly, interacts with CtaB. Heme b serves as cofactor.

It localises to the cell membrane. The enzyme catalyses Fe(II)-heme o + 2 A + H2O = Fe(II)-heme a + 2 AH2. Its pathway is porphyrin-containing compound metabolism; heme A biosynthesis; heme A from heme O: step 1/1. Catalyzes the conversion of heme O to heme A by two successive hydroxylations of the methyl group at C8. The first hydroxylation forms heme I, the second hydroxylation results in an unstable dihydroxymethyl group, which spontaneously dehydrates, resulting in the formyl group of heme A. This Sinorhizobium fredii (strain NBRC 101917 / NGR234) protein is Heme A synthase.